Consider the following 138-residue polypeptide: Endoribonuclease YbeY (138 aa).

Positions 106, 110, and 116 each coordinate Zn(2+).

This sequence belongs to the endoribonuclease YbeY family. Requires Zn(2+) as cofactor.

The protein resides in the cytoplasm. Functionally, single strand-specific metallo-endoribonuclease involved in late-stage 70S ribosome quality control and in maturation of the 3' terminus of the 16S rRNA. In Phocaeicola vulgatus (strain ATCC 8482 / DSM 1447 / JCM 5826 / CCUG 4940 / NBRC 14291 / NCTC 11154) (Bacteroides vulgatus), this protein is Endoribonuclease YbeY.